The following is a 153-amino-acid chain: UPF0266 membrane protein YE1773 (153 aa).

3 helical membrane passes run isoleucine 6–methionine 26, isoleucine 45–asparagine 65, and glutamate 67–isoleucine 87.

This sequence belongs to the UPF0266 family.

The protein resides in the cell inner membrane. The polypeptide is UPF0266 membrane protein YE1773 (Yersinia enterocolitica serotype O:8 / biotype 1B (strain NCTC 13174 / 8081)).